A 453-amino-acid chain; its full sequence is MVKSLHYFILPLIGNALILNTPPEYQPGYGYVGPACAVFDSTLFLHGVSKRKLNDHELHIFSSYQHDLSAFKDSSSSFDSFEASFPTIPKFCGGYDDSIEVVLDSCIVRNNHVYVGDHLIRPLTNFEKQKIQLVKMRRMYGESKRKRSKRSSKPLPGTRPQRDFSEMLHKLLNINSTVTSRFLPVVSQSPLFAMEGPWQNLFELGKDKDMIELLAASQFKPQLPPVASVPVAPVIDITKIDSPYRATFTTMKPRKSQKPEKKKEVFNVFTTKTNPQITTTTMTTTTRTSTAIPTTTTTPRQISLQTIPFSTTTRQPNFDKTKTPATMPSASSSSLSSIQTVVDPIILKLISKALEKNEMIDEYSLKQALSMRNVATTTTPLPLRFILPTPAAPNPFLPSTRVGGLSHNHLFIPHQPFTTLVSTDSRYSAPNPLSHRLPNEICRVHMNSNPFHF.

Disordered stretches follow at residues 140–161 and 311–332; these read YGES…TRPQ and TTTR…SASS.

This is an uncharacterized protein from Caenorhabditis elegans.